Here is a 281-residue protein sequence, read N- to C-terminus: 2-dehydro-3-deoxyphosphooctonate aldolase (281 aa).

Belongs to the KdsA family.

It localises to the cytoplasm. It carries out the reaction D-arabinose 5-phosphate + phosphoenolpyruvate + H2O = 3-deoxy-alpha-D-manno-2-octulosonate-8-phosphate + phosphate. The protein operates within carbohydrate biosynthesis; 3-deoxy-D-manno-octulosonate biosynthesis; 3-deoxy-D-manno-octulosonate from D-ribulose 5-phosphate: step 2/3. Its pathway is bacterial outer membrane biogenesis; lipopolysaccharide biosynthesis. The protein is 2-dehydro-3-deoxyphosphooctonate aldolase of Janthinobacterium sp. (strain Marseille) (Minibacterium massiliensis).